We begin with the raw amino-acid sequence, 537 residues long: Senescence-associated carboxylesterase 101 (537 aa).

The signal sequence occupies residues 1–27 (MESSSSLKGSALGKLVVTSGLLHSSWS). Residues 140–160 (VIITGAALGGSVASLYTLWLL) traverse the membrane as a helical segment.

As to quaternary structure, part of a nuclear complex made of EDS1, PAD4 and SAG101, that can be redirected to the cytoplasm in the presence of an extranuclear form of EDS1. Interacts directly with EDS1. Expressed in senescing leaves.

The protein localises to the membrane. It is found in the nucleus. The protein resides in the cytoplasm. The enzyme catalyses a carboxylic ester + H2O = an alcohol + a carboxylate + H(+). Acyl hydrolase that triggers the leaf senescence onset. Can use triolein as substrate to produce oleic acids. Functionally, involved in the EDS1-dependent intrinsic and indispensable resistance signaling pathway; together with PAD4, required for programmed cell death triggered by RPS4 in response to avirulent pathogens (e.g. P.syringae pv. tomato strain DC3000 and H.parasitica isolates CALA2 and EMWA1) and in restricting the growth of virulent pathogens (e.g. H.parasitica isolates NOCO2 and P.syringae pv. tomato strain DC3000 avrRps4). Contributes in reinforcing the immune response around hypersensitive response foci. Regulates the nuclear localization of EDS1. Essential for the RPP8/HRT-mediated resistance to the turnip crinkle virus (TCV). Involved in the post-invasion resistance to P.pachyrhizi in the mesophyll. This chain is Senescence-associated carboxylesterase 101 (SAG101), found in Arabidopsis thaliana (Mouse-ear cress).